The sequence spans 89 residues: DNA/RNA-binding protein Alba 1 (89 aa).

It belongs to the histone-like Alba family.

It localises to the cytoplasm. Its subcellular location is the chromosome. In terms of biological role, binds double-stranded DNA tightly but without sequence specificity. Involved in DNA compaction. This is DNA/RNA-binding protein Alba 1 from Archaeoglobus fulgidus (strain ATCC 49558 / DSM 4304 / JCM 9628 / NBRC 100126 / VC-16).